Here is a 242-residue protein sequence, read N- to C-terminus: Type III pantothenate kinase (242 aa).

Residue 6-13 (DAGNTRIK) coordinates ATP. Substrate is bound by residues tyrosine 90 and 97–100 (GADR). The active-site Proton acceptor is the aspartate 99. An ATP-binding site is contributed by threonine 122. Threonine 172 provides a ligand contact to substrate.

The protein belongs to the type III pantothenate kinase family. As to quaternary structure, homodimer. NH4(+) serves as cofactor. Requires K(+) as cofactor.

It is found in the cytoplasm. The catalysed reaction is (R)-pantothenate + ATP = (R)-4'-phosphopantothenate + ADP + H(+). It participates in cofactor biosynthesis; coenzyme A biosynthesis; CoA from (R)-pantothenate: step 1/5. Catalyzes the phosphorylation of pantothenate (Pan), the first step in CoA biosynthesis. This is Type III pantothenate kinase from Aromatoleum aromaticum (strain DSM 19018 / LMG 30748 / EbN1) (Azoarcus sp. (strain EbN1)).